Reading from the N-terminus, the 184-residue chain is Photosystem I assembly protein Ycf4 (184 aa).

2 consecutive transmembrane segments (helical) span residues 19-39 (LSNF…LLVG) and 57-77 (FIFF…LFIS).

The protein belongs to the Ycf4 family.

It localises to the plastid. Its subcellular location is the chloroplast thylakoid membrane. Functionally, seems to be required for the assembly of the photosystem I complex. The protein is Photosystem I assembly protein Ycf4 of Jasminum nudiflorum (Winter jasmine).